The chain runs to 216 residues: Probable GTP-binding protein EngB (216 aa).

Residues 23–197 (EGAEIAFAGR…EHKVAGWLGL (175 aa)) enclose the EngB-type G domain. Residues 31-38 (GRSNAGKS), 58-62 (GRTQL), 76-79 (DLPG), 143-146 (TKCD), and 176-178 (FSS) each bind GTP. Residues Ser-38 and Thr-60 each coordinate Mg(2+).

This sequence belongs to the TRAFAC class TrmE-Era-EngA-EngB-Septin-like GTPase superfamily. EngB GTPase family. The cofactor is Mg(2+).

Functionally, necessary for normal cell division and for the maintenance of normal septation. This Aromatoleum aromaticum (strain DSM 19018 / LMG 30748 / EbN1) (Azoarcus sp. (strain EbN1)) protein is Probable GTP-binding protein EngB.